An 825-amino-acid chain; its full sequence is Neuroligin-3 (825 aa).

The N-terminal stretch at 1–34 (MWLQPSLSLSPTPTVGRSLCLTLGFLSLVLRAST) is a signal peptide. Topologically, residues 35 to 686 (QAPAPTVNTH…NPRDYSTELS (652 aa)) are extracellular. Asn-95 carries N-linked (GlcNAc...) asparagine glycosylation. Residues Cys-103 and Cys-138 are joined by a disulfide bond. Residues 151–172 (SGAKKQGEDLADNDGDEDEDIR) are disordered. A compositionally biased stretch (acidic residues) spans 159–171 (DLADNDGDEDEDI). 2 disulfide bridges follow: Cys-317/Cys-328 and Cys-487/Cys-521. Residue Asn-522 is glycosylated (N-linked (GlcNAc...) asparagine). Polar residues-rich tracts occupy residues 622 to 633 (TKVPPPDTTHSS) and 654 to 666 (AYSNENAPGSWNG). The disordered stretch occupies residues 622–668 (TKVPPPDTTHSSHITRRPNGKTWSTKRPAISPAYSNENAPGSWNGDQ). Residues 687-707 (VTIAVGASLLFLNVLAFAALY) traverse the membrane as a helical segment. Residues 708–825 (YRKDKRRQEP…LPHSHSTTRV (118 aa)) lie on the Cytoplasmic side of the membrane. A Phosphoserine modification is found at Ser-722. Residue Tyr-769 is modified to Phosphotyrosine.

This sequence belongs to the type-B carboxylesterase/lipase family. In terms of assembly, homodimer, and heterodimer with NLGN1 and NLGN2. Interacts with neurexins NRXN1, NRXN2 and NRXN3. Interaction with neurexins is mediated by heparan sulfate glycan modification on neurexin. Interacts (via its C-terminus) with DLG4/PSD-95 (via PDZ domain 3). In terms of tissue distribution, brain and arteries (at protein level). Detected in heart, brain, spleen, lung, liver, skeletal muscle, kidney and testis. Expressed in olfactory bulb and olfactory epithelium. Found in olfactory ensheathing glia but not in olfactory neurons, and in developing peripheral glia.

Its subcellular location is the cell membrane. The protein localises to the synapse. Cell surface protein involved in cell-cell-interactions via its interactions with neurexin family members. Plays a role in synapse function and synaptic signal transmission, and probably mediates its effects by recruiting and clustering other synaptic proteins. May promote the initial formation of synapses, but is not essential for this. May also play a role in glia-glia or glia-neuron interactions in the developing peripheral nervous system. In Mus musculus (Mouse), this protein is Neuroligin-3 (Nlgn3).